Reading from the N-terminus, the 202-residue chain is Transmembrane 4 L6 family member 1 (202 aa).

Residues 1–9 (MCSSKCTRY) lie on the Cytoplasmic side of the membrane. Residues 10–30 (IGHSLVVFAVLCIVANILLYF) form a helical membrane-spanning segment. The Extracellular segment spans residues 31–49 (PNGETKYAYEDHLSRFVWF). A helical transmembrane segment spans residues 50 to 70 (FAGIVGGGLLILLPAFVFLGL). The Cytoplasmic portion of the chain corresponds to 71–93 (EGEDCCGCWSCENYGKRCTMLSS). The chain crosses the membrane as a helical span at residues 94–114 (IMAALIGIAGSGYCVIVAALG). At 115–161 (LAEGPKCGDSHGMWNYTFANTDGQYLLDPTTWSKCHEPNNIVEWNVT) the chain is on the extracellular side. Asn129 and Asn159 each carry an N-linked (GlcNAc...) asparagine glycan. Residues 162-182 (LFSILLALGGLEFILCLIQVI) traverse the membrane as a helical segment. Topologically, residues 183 to 202 (NGVLEGMCSYCCSHQQQYDC) are cytoplasmic.

It belongs to the L6 tetraspanin family. Present in high molecular weight complexes in tumor cells. Interacts with SDCBP2.

The protein localises to the membrane. The sequence is that of Transmembrane 4 L6 family member 1 (TM4SF1) from Mesocricetus auratus (Golden hamster).